We begin with the raw amino-acid sequence, 388 residues long: Succinate--CoA ligase [ADP-forming] subunit beta (388 aa).

The 236-residue stretch at 9–244 folds into the ATP-grasp domain; sequence KQLFAEFGLP…PSQEDEREAH (236 aa). ATP-binding positions include Lys-46, 53–55, Glu-99, Ser-102, and Glu-107; that span reads GRG. Mg(2+) is bound by residues Asn-199 and Asp-213. Substrate is bound by residues Asn-264 and 321 to 323; that span reads GIV.

The protein belongs to the succinate/malate CoA ligase beta subunit family. Heterotetramer of two alpha and two beta subunits. Mg(2+) serves as cofactor.

The enzyme catalyses succinate + ATP + CoA = succinyl-CoA + ADP + phosphate. It catalyses the reaction GTP + succinate + CoA = succinyl-CoA + GDP + phosphate. The protein operates within carbohydrate metabolism; tricarboxylic acid cycle; succinate from succinyl-CoA (ligase route): step 1/1. Its function is as follows. Succinyl-CoA synthetase functions in the citric acid cycle (TCA), coupling the hydrolysis of succinyl-CoA to the synthesis of either ATP or GTP and thus represents the only step of substrate-level phosphorylation in the TCA. The beta subunit provides nucleotide specificity of the enzyme and binds the substrate succinate, while the binding sites for coenzyme A and phosphate are found in the alpha subunit. The sequence is that of Succinate--CoA ligase [ADP-forming] subunit beta from Vibrio parahaemolyticus serotype O3:K6 (strain RIMD 2210633).